We begin with the raw amino-acid sequence, 889 residues long: Mitochondrial intermediate peptidase (889 aa).

The transit peptide at 1–30 directs the protein to the mitochondrion; sequence MASTSKNAQRAAASVAHSYHVCLARRMSRL. A disordered region spans residues 60–112; sequence SSSLAAQRVQRPTSAGPILTNPISDHEKDNDELRSLFDAPPTSSSANHLRSSG. Over residues 83–94 the composition is skewed to basic and acidic residues; sequence SDHEKDNDELRS. Residues 100–112 are compositionally biased toward polar residues; it reads PTSSSANHLRSSG. His670 contributes to the Zn(2+) binding site. Residue Glu671 is part of the active site. His674 and His677 together coordinate Zn(2+).

Belongs to the peptidase M3 family. It depends on Zn(2+) as a cofactor.

Its subcellular location is the mitochondrion matrix. The enzyme catalyses Release of an N-terminal octapeptide as second stage of processing of some proteins imported into the mitochondrion.. Functionally, cleaves proteins, imported into the mitochondrion, to their mature size. While most mitochondrial precursor proteins are processed to the mature form in one step by mitochondrial processing peptidase (MPP), the sequential cleavage by MIP of an octapeptide after initial processing by MPP is a required step for a subgroup of nuclear-encoded precursor proteins destined for the matrix or the inner membrane. The sequence is that of Mitochondrial intermediate peptidase (OCT1) from Mycosarcoma maydis (Corn smut fungus).